Here is a 196-residue protein sequence, read N- to C-terminus: Pyridoxal 5'-phosphate synthase subunit PdxT (196 aa).

Position 46–48 (46–48 (GES)) interacts with L-glutamine. Cys-78 functions as the Nucleophile in the catalytic mechanism. L-glutamine-binding positions include Arg-105 and 134–135 (IR). Active-site charge relay system residues include His-170 and Glu-172.

This sequence belongs to the glutaminase PdxT/SNO family. In the presence of PdxS, forms a dodecamer of heterodimers. Only shows activity in the heterodimer.

It carries out the reaction aldehydo-D-ribose 5-phosphate + D-glyceraldehyde 3-phosphate + L-glutamine = pyridoxal 5'-phosphate + L-glutamate + phosphate + 3 H2O + H(+). It catalyses the reaction L-glutamine + H2O = L-glutamate + NH4(+). It functions in the pathway cofactor biosynthesis; pyridoxal 5'-phosphate biosynthesis. Functionally, catalyzes the hydrolysis of glutamine to glutamate and ammonia as part of the biosynthesis of pyridoxal 5'-phosphate. The resulting ammonia molecule is channeled to the active site of PdxS. This is Pyridoxal 5'-phosphate synthase subunit PdxT from Pelotomaculum thermopropionicum (strain DSM 13744 / JCM 10971 / SI).